The chain runs to 1909 residues: Endoribonuclease Dicer homolog 1 (1909 aa).

Positions 99–177 (TVKENGLQKN…NNKKKRECNN (79 aa)) are disordered. Basic and acidic residues predominate over residues 110 to 124 (GKRDEFSKEEGDKDR). Positions 131-146 (SYQSERSNLSGRGHVN) are enriched in polar residues. Basic and acidic residues predominate over residues 147–177 (NSREGDRFMNRKRTRNWDEAGNNKKKRECNN). A Helicase ATP-binding domain is found at 256-433 (VLEQAKAKNT…QVDCAIKIRN (178 aa)). 269–276 (LETGAGKT) serves as a coordination point for ATP. The short motif at 378–381 (DECH) is the DECH box element. The region spanning 651-812 (SLIKLLLKYQ…RTDLSHLKDT (162 aa)) is the Helicase C-terminal domain. Positions 840 to 935 (AVGLVHFYCS…LPDKGSGQDA (96 aa)) constitute a Dicer dsRNA-binding fold domain. Positions 929–952 (KGSGQDAEKADQDDEGEPVPGTAR) are disordered. The PAZ domain occupies 1189–1318 (EVEEDLSKGK…LPPELCVVHP (130 aa)). RNase III domains lie at 1342-1518 (LAVQ…VEGG) and 1559-1707 (FVGL…LDSG). The Mg(2+) site is built by glutamate 1597, aspartate 1693, and glutamate 1696. DRBM domains lie at 1733–1796 (HPVR…ALKE) and 1831–1906 (FTRQ…LLNK). The disordered stretch occupies residues 1801 to 1831 (ESKEKHINNGNAGEDQGENENGNKKNGHQPF).

This sequence belongs to the helicase family. Dicer subfamily. As to quaternary structure, interacts (via N-terminus) with DDL. Interacts (via DRBM domains) with DRB1, DRB2 and DRB5. May interact with AGO1 or AGO10 through their common PAZ domains. The cofactor is Mg(2+). Requires Mn(2+) as cofactor. Highly expressed in flowers and seeds and detected in leaves and stems. Found in ovule integuments, inflorescence and floral meristems, stigma of flowers until just before pollination, vasculature of the funiculus, and embryo.

It localises to the nucleus. Functionally, ribonuclease (RNase) III involved in RNA-mediated post-transcriptional gene silencing (PTGS). Functions in the microRNAs (miRNAs) biogenesis pathway by cleaving primary miRNAs (pri-miRNAs) and precursor miRNAs (pre-miRNAs). Functions with DRB1/HYL1 and SERRATE proteins for accurate pri-miRNAs to miRNAs processing. Indirectly involved in the production of trans-acting small interfering RNAs (ta-siRNAs) derived from the TAS1, TAS2 or TAS3 endogenous transcripts by participating in the production of their initiating miRNAs. Involved in the processing of natural siRNAs (nat-siRNAs, derived from cis-natural antisense transcripts) by cleaving 24 nucleotide nat-siRNAs into 21 nucleotide nat-siRNAs. Can produce RDR6-dependent endogenous ta-siRNAs derived from TAS1 and TAS2. Required for the production of 30-40 nucleotide bacterial-induced long siRNAs (lsiRNA). Acts redundantly with DICER-LIKE 3 (DCL3) to promote flowering via repression of FLOWERING LOCUS C (FLC). Represses antiviral RNA silencing through negative regulation of the expression of DCL4 and DCL3. This chain is Endoribonuclease Dicer homolog 1 (DCL1), found in Arabidopsis thaliana (Mouse-ear cress).